Reading from the N-terminus, the 72-residue chain is Cytochrome b-c1 complex subunit 9 (72 aa).

Residues 1–27 (MESAARRSGGGVLEGFYRLVMRRTPVY) are Mitochondrial matrix-facing. A helical transmembrane segment spans residues 28–53 (VTFVIAGALLGERAVDYGVKTLWEKN). At 54 to 72 (NVGKRYEDISVLGQRPVDE) the chain is on the mitochondrial intermembrane side.

This sequence belongs to the UQCR10/QCR9 family. In terms of assembly, component of the ubiquinol-cytochrome c oxidoreductase (cytochrome b-c1 complex, complex III, CIII), a multisubunit enzyme composed of 3 respiratory subunits cytochrome b, cytochrome c1 and Rieske protein, 2 core protein subunits, and additional low-molecular weight protein subunits. The complex exists as an obligatory dimer and forms supercomplexes (SCs) in the inner mitochondrial membrane with cytochrome c oxidase (complex IV, CIV).

It is found in the mitochondrion inner membrane. In terms of biological role, component of the ubiquinol-cytochrome c oxidoreductase, a multisubunit transmembrane complex that is part of the mitochondrial electron transport chain which drives oxidative phosphorylation. The respiratory chain contains 3 multisubunit complexes succinate dehydrogenase (complex II, CII), ubiquinol-cytochrome c oxidoreductase (cytochrome b-c1 complex, complex III, CIII) and cytochrome c oxidase (complex IV, CIV), that cooperate to transfer electrons derived from NADH and succinate to molecular oxygen, creating an electrochemical gradient over the inner membrane that drives transmembrane transport and the ATP synthase. The cytochrome b-c1 complex catalyzes electron transfer from ubiquinol to cytochrome c, linking this redox reaction to translocation of protons across the mitochondrial inner membrane, with protons being carried across the membrane as hydrogens on the quinol. In the process called Q cycle, 2 protons are consumed from the matrix, 4 protons are released into the intermembrane space and 2 electrons are passed to cytochrome c. In Solanum tuberosum (Potato), this protein is Cytochrome b-c1 complex subunit 9.